Reading from the N-terminus, the 288-residue chain is Protoheme IX farnesyltransferase 2 (288 aa).

The next 8 helical transmembrane spans lie at 16 to 36 (IGVF…GAVP), 38 to 58 (FAPV…AGAF), 88 to 108 (LWPL…AFAA), 111 to 131 (WAAL…TVWL), 139 to 159 (IVIG…VAVP), 166 to 186 (LILA…LATA), 227 to 247 (AFFG…GWFL), and 266 to 286 (FFAS…EPLL).

It belongs to the UbiA prenyltransferase family. Protoheme IX farnesyltransferase subfamily.

The protein localises to the cell inner membrane. The enzyme catalyses heme b + (2E,6E)-farnesyl diphosphate + H2O = Fe(II)-heme o + diphosphate. It participates in porphyrin-containing compound metabolism; heme O biosynthesis; heme O from protoheme: step 1/1. Converts heme B (protoheme IX) to heme O by substitution of the vinyl group on carbon 2 of heme B porphyrin ring with a hydroxyethyl farnesyl side group. The polypeptide is Protoheme IX farnesyltransferase 2 (Paramagnetospirillum magneticum (strain ATCC 700264 / AMB-1) (Magnetospirillum magneticum)).